A 249-amino-acid polypeptide reads, in one-letter code: Ditrans,polycis-undecaprenyl-diphosphate synthase ((2E,6E)-farnesyl-diphosphate specific) (249 aa).

Residue D29 is part of the active site. Mg(2+) is bound at residue D29. Residues 30–33, W34, R42, H46, and 74–76 contribute to the substrate site; these read GNGR and STE. N77 serves as the catalytic Proton acceptor. Substrate is bound by residues W78, R80, R197, and 203–205; that span reads RLS. Residue E216 participates in Mg(2+) binding.

The protein belongs to the UPP synthase family. As to quaternary structure, homodimer. The cofactor is Mg(2+).

The catalysed reaction is 8 isopentenyl diphosphate + (2E,6E)-farnesyl diphosphate = di-trans,octa-cis-undecaprenyl diphosphate + 8 diphosphate. In terms of biological role, generates ditrans,octacis-undecaprenyl pyrophosphate (UPP) from isopentenyl pyrophosphate (IPP) and farnesyl diphosphate. UPP is the precursor of glycosyl carrier lipid in the biosynthesis of bacterial cell wall polysaccharide components such as peptidoglycan and lipopolysaccharide. The sequence is that of Ditrans,polycis-undecaprenyl-diphosphate synthase ((2E,6E)-farnesyl-diphosphate specific) (uppS) from Micrococcus luteus (Micrococcus lysodeikticus).